Consider the following 137-residue polypeptide: Putative pre-16S rRNA nuclease (137 aa).

This sequence belongs to the YqgF nuclease family.

It localises to the cytoplasm. Its function is as follows. Could be a nuclease involved in processing of the 5'-end of pre-16S rRNA. The protein is Putative pre-16S rRNA nuclease of Clostridium kluyveri (strain NBRC 12016).